A 293-amino-acid polypeptide reads, in one-letter code: Glycine--tRNA ligase alpha subunit (293 aa).

It belongs to the class-II aminoacyl-tRNA synthetase family. In terms of assembly, tetramer of two alpha and two beta subunits.

Its subcellular location is the cytoplasm. It carries out the reaction tRNA(Gly) + glycine + ATP = glycyl-tRNA(Gly) + AMP + diphosphate. The chain is Glycine--tRNA ligase alpha subunit from Acaryochloris marina (strain MBIC 11017).